The primary structure comprises 73 residues: Large ribosomal subunit protein bL31 (73 aa).

It belongs to the bacterial ribosomal protein bL31 family. Type A subfamily. In terms of assembly, part of the 50S ribosomal subunit.

Binds the 23S rRNA. In Agrobacterium fabrum (strain C58 / ATCC 33970) (Agrobacterium tumefaciens (strain C58)), this protein is Large ribosomal subunit protein bL31.